Reading from the N-terminus, the 860-residue chain is Leucine--tRNA ligase (860 aa).

The 'HIGH' region motif lies at 42-52 (PYPSGRLHMGH). A 'KMSKS' region motif is present at residues 619–623 (KMSKS). Lys-622 contacts ATP.

This sequence belongs to the class-I aminoacyl-tRNA synthetase family.

The protein resides in the cytoplasm. The enzyme catalyses tRNA(Leu) + L-leucine + ATP = L-leucyl-tRNA(Leu) + AMP + diphosphate. The protein is Leucine--tRNA ligase of Escherichia coli O17:K52:H18 (strain UMN026 / ExPEC).